The chain runs to 269 residues: Shikimate dehydrogenase (NADP(+)) (269 aa).

Residues 13–15 and Thr-60 contribute to the shikimate site; that span reads SLS. The Proton acceptor role is filled by Lys-64. Position 76 (Glu-76) interacts with NADP(+). Shikimate-binding residues include Asn-85 and Asp-100. Residues 124 to 128, 148 to 153, and Ile-209 contribute to the NADP(+) site; these read GAGGA and NRTMSR. Tyr-211 contacts shikimate. An NADP(+)-binding site is contributed by Gly-232. Shikimate is bound at residue Gln-239.

This sequence belongs to the shikimate dehydrogenase family. As to quaternary structure, monomer or homodimer.

It carries out the reaction shikimate + NADP(+) = 3-dehydroshikimate + NADPH + H(+). It participates in metabolic intermediate biosynthesis; chorismate biosynthesis; chorismate from D-erythrose 4-phosphate and phosphoenolpyruvate: step 4/7. Its function is as follows. Involved in the biosynthesis of the chorismate, which leads to the biosynthesis of aromatic amino acids. Catalyzes the reversible NADPH linked reduction of 3-dehydroshikimate (DHSA) to yield shikimate (SA). It can also use NAD to oxidize shikimate. The protein is Shikimate dehydrogenase (NADP(+)) of Staphylococcus epidermidis (strain ATCC 35984 / DSM 28319 / BCRC 17069 / CCUG 31568 / BM 3577 / RP62A).